The sequence spans 1034 residues: Integrin alpha-V (1034 aa).

Positions 1 to 19 (MAALRASLLLSCALTAARA) are cleaved as a signal peptide. The Extracellular segment spans residues 20–978 (FNLDAERPAV…WGIQPQPMPV (959 aa)). FG-GAP repeat units follow at residues 21-86 (NLDA…RNCQ), 97-158 (DFAP…VEYA), 161-213 (RSTT…LAKY), 225-279 (QLAT…GKNM), 280-345 (SSMY…GGFQ), 346-403 (IAKL…GLNA), and 407-470 (RILE…VNPT). N-linked (GlcNAc...) asparagine glycosylation is present at Asn-62. Cystine bridges form between Cys-77–Cys-85, Cys-126–Cys-146, and Cys-160–Cys-173. Ca(2+) contacts are provided by Asp-248, Asp-252, Ile-254, and Asp-256. 2 N-linked (GlcNAc...) asparagine glycosylation sites follow: Asn-278 and Asn-284. Residues Asp-302, Asn-304, Asp-306, Tyr-308, Asp-310, Asp-367, Asp-369, Asp-371, Phe-373, Asp-375, Asp-431, Asp-433, Asn-435, Tyr-437, and Asp-439 each contribute to the Ca(2+) site. 2 disulfide bridges follow: Cys-479–Cys-488 and Cys-494–Cys-551. Residues Asn-540 and Asn-601 are each glycosylated (N-linked (GlcNAc...) asparagine). Disulfide bonds link Cys-612-Cys-618 and Cys-684-Cys-697. N-linked (GlcNAc...) asparagine glycans are attached at residues Asn-690, Asn-821, Asn-837, and Asn-860. 2 disulfide bridges follow: Cys-838–Cys-900 and Cys-890–Cys-895. Residues Asn-931, Asn-951, Asn-959, and Asn-966 are each glycosylated (N-linked (GlcNAc...) asparagine). The helical transmembrane segment at 979–1002 (PVWVIILAVLAGLLLLAVLVLVMY) threads the bilayer. Over 1003–1034 (RMGFFKRVRPPQEEQEREQLQPHENGEGTSEA) the chain is Cytoplasmic. The short motif at 1005–1009 (GFFKR) is the GFFKR motif element. Residues 1013-1028 (PQEEQEREQLQPHENG) show a composition bias toward basic and acidic residues. A disordered region spans residues 1013-1034 (PQEEQEREQLQPHENGEGTSEA).

This sequence belongs to the integrin alpha chain family. Heterodimer of an alpha and a beta subunit. The alpha subunit is composed of a heavy and a light chain linked by a disulfide bond. Alpha-V (ITGAV) associates with either beta-1 (ITGB1), beta-3 (ITGB3), beta-5 (ITGB5), beta-6 (ITGB6) or beta-8 (ITGB8). Interacts with RAB25. Interacts with CIB1. Integrins ITGAV:ITGB3 and ITGAV:ITGB5 interact with FBLN5 (via N-terminus). ITGAV:ITGB3 and ITGAV:ITGB5 interact with CCN3. ITGAV:ITGB3 interacts with ADGRA2. ITGAV:ITGB3 interacts with FGF2; it is likely that FGF2 can simultaneously bind ITGAV:ITGB3 and FGF receptors. ITGAV:ITGB3 is found in a ternary complex with CX3CR1 and CX3CL1. ITGAV:ITGB3 is found in a ternary complex with NRG1 and ERBB3. ITGAV:ITGB3 is found in a ternary complex with FGF1 and FGFR1. ITGAV:ITGB3 is found in a ternary complex with IGF1 and IGF1R. ITGAV:ITGB3 interacts with IGF2. ITGAV:ITGB3 and ITGAV:ITGB6 interact with FBN1. ITGAV:ITGB3 interacts with CD9, CD81 and CD151 (via second extracellular domain). ITGAV:ITGB6 interacts with TGFB1.

It localises to the membrane. Its subcellular location is the cell junction. It is found in the focal adhesion. The alpha-V (ITGAV) integrins are receptors for vitronectin, cytotactin, fibronectin, fibrinogen, laminin, matrix metalloproteinase-2, osteopontin, osteomodulin, prothrombin, thrombospondin, TGFB1 and vWF. They recognize the sequence R-G-D in a wide array of ligands. Alpha-V integrins may play a role in embryo implantation, angiogenesis and wound healing. ITGAV:ITGB3 binds to fractalkine (CX3CL1) and may act as its coreceptor in CX3CR1-dependent fractalkine signaling. ITGAV:ITGB3 binds to NRG1 (via EGF domain) and this binding is essential for NRG1-ERBB signaling. ITGAV:ITGB3 binds to FGF1 and this binding is essential for FGF1 signaling. ITGAV:ITGB3 binds to FGF2 and this binding is essential for FGF2 signaling. ITGAV:ITGB3 binds to IGF1 and this binding is essential for IGF1 signaling. ITGAV:ITGB3 binds to IGF2 and this binding is essential for IGF2 signaling. ITGAV:ITGB3 binds to IL1B and this binding is essential for IL1B signaling. ITGAV:ITGB3 binds to PLA2G2A via a site (site 2) which is distinct from the classical ligand-binding site (site 1) and this induces integrin conformational changes and enhanced ligand binding to site 1. ITGAV:ITGB3 and ITGAV:ITGB6 act as receptors for fibrillin-1 (FBN1) and mediate R-G-D-dependent cell adhesion to FBN1. Integrin alpha-V/beta-6 or alpha-V/beta-8 (ITGAV:ITGB6 or ITGAV:ITGB8) mediates R-G-D-dependent release of transforming growth factor beta-1 (TGF-beta-1) from regulatory Latency-associated peptide (LAP), thereby playing a key role in TGF-beta-1 activation. ITGAV:ITGB3 acts as a receptor for CD40LG. ITGAV:ITGB3 acts as a receptor for IBSP and promotes cell adhesion and migration to IBSP. The sequence is that of Integrin alpha-V (ITGAV) from Gallus gallus (Chicken).